Here is a 1188-residue protein sequence, read N- to C-terminus: DNA polymerase (1188 aa).

Residues 1-74 (MALVPSPRAG…PAANNVSLTP (74 aa)) are disordered. Low complexity predominate over residues 31–41 (STAGAAPTATR).

This sequence belongs to the DNA polymerase type-B family. Heterodimer with the terminal protein; this heterodimer binds to bp 9 to 18 of the genome. Forms a complex with viral pTP, DBP and hosts NFIA and POU2F1/OCT1 for initiation of replication.

The protein localises to the host nucleus. It catalyses the reaction DNA(n) + a 2'-deoxyribonucleoside 5'-triphosphate = DNA(n+1) + diphosphate. Its function is as follows. Eukaryotic-type DNA polymerase involved in viral genomic replication. DNA synthesis is protein primed, and acts in a strand displacement replication. Assembles in complex with viral pTP, DBP, host NFIA and host POU2F1/OCT1 on viral origin of replication. The polymerase covalently transfers dCMP onto pTP, thereby initiating complementary strand synthesis. The chain is DNA polymerase from Human adenovirus F serotype 40 (HAdV-40).